We begin with the raw amino-acid sequence, 198 residues long: Recombination protein RecR (198 aa).

The C4-type zinc finger occupies 57-72 (CPVCFNITDAERCDVC). One can recognise a Toprim domain in the interval 80-173 (NLICVVEEPG…VVSRIAYGLP (94 aa)).

This sequence belongs to the RecR family.

May play a role in DNA repair. It seems to be involved in an RecBC-independent recombinational process of DNA repair. It may act with RecF and RecO. The sequence is that of Recombination protein RecR from Deinococcus deserti (strain DSM 17065 / CIP 109153 / LMG 22923 / VCD115).